The sequence spans 809 residues: Valine--tRNA ligase (809 aa).

Residues 60–70 (PFTSGELHMGH) carry the 'HIGH' region motif. The short motif at 546 to 550 (RMSKS) is the 'KMSKS' region element. Lys-549 serves as a coordination point for ATP.

The protein belongs to the class-I aminoacyl-tRNA synthetase family. ValS type 2 subfamily.

The protein resides in the cytoplasm. The catalysed reaction is tRNA(Val) + L-valine + ATP = L-valyl-tRNA(Val) + AMP + diphosphate. In terms of biological role, catalyzes the attachment of valine to tRNA(Val). As ValRS can inadvertently accommodate and process structurally similar amino acids such as threonine, to avoid such errors, it has a 'posttransfer' editing activity that hydrolyzes mischarged Thr-tRNA(Val) in a tRNA-dependent manner. This is Valine--tRNA ligase from Sulfurisphaera tokodaii (strain DSM 16993 / JCM 10545 / NBRC 100140 / 7) (Sulfolobus tokodaii).